The following is a 695-amino-acid chain: ATP-dependent zinc metalloprotease FTSH 2, chloroplastic (695 aa).

Residues 1–47 (MAASSACLVGNGLSVNTTTKQRLSKHFSGRQTSFSSVIRTSKVNVVK) constitute a chloroplast transit peptide. Residues 48–82 (ASLDGKKKQEGRRDFLKILLGNAGVGLVASGKANA) constitute a thylakoid transit peptide. The Lumenal, thylakoid segment spans residues 83–167 (DEQGVSSSRM…AHNAQEDQGS (85 aa)). Residues 168–188 (VLFNLIGNLAFPALLIGGLFL) form a helical membrane-spanning segment. Residues 189-695 (LSRRSGGGMG…PASAPTPAAV (507 aa)) are Stromal-facing. 267–274 (GPPGTGKT) is a binding site for ATP. Residue H488 coordinates Zn(2+). E489 is an active-site residue. Residues H492 and D566 each coordinate Zn(2+). Positions 673 to 695 (PPENRVPSSTTTTPASAPTPAAV) are disordered. Low complexity predominate over residues 679 to 695 (PSSTTTTPASAPTPAAV).

The protein in the N-terminal section; belongs to the AAA ATPase family. In the C-terminal section; belongs to the peptidase M41 family. Interacts with CHIP and FTSH5. Heterohexamers with FTSH1, FTSH5 and FTSH8. May also form homooligomers. Zn(2+) is required as a cofactor. In terms of processing, the FTSH2 precursor is ubiquitinated by CHIP in the cytoplasm. Expressed in cotyledons, cauline and rosette leaves, stems, sepals, flovers and siliques. Very low in roots.

The protein localises to the plastid. The protein resides in the chloroplast thylakoid membrane. Its function is as follows. Part of a complex that function as an ATP-dependent zinc metallopeptidase. Involved in the thylakoid formation and in the removal of damaged D1 in the photosystem II, preventing cell death under high-intensity light conditions, but not involved in thermotolerance. This is ATP-dependent zinc metalloprotease FTSH 2, chloroplastic (FTSH2) from Arabidopsis thaliana (Mouse-ear cress).